Reading from the N-terminus, the 442-residue chain is tRNA-2-methylthio-N(6)-dimethylallyladenosine synthase (442 aa).

The MTTase N-terminal domain maps to 5–122; that stretch reads KKVFIKTLGC…LPEMIKQKQK (118 aa). C14, C51, C85, C159, C163, and C166 together coordinate [4Fe-4S] cluster. Residues 145-378 enclose the Radical SAM core domain; it reads KAEGAKAYVS…DLLNSNAQII (234 aa). Residues 380–442 enclose the TRAM domain; that stretch reads RQMVGTNQRI…LPNSLRGELI (63 aa).

It belongs to the methylthiotransferase family. MiaB subfamily. Monomer. Requires [4Fe-4S] cluster as cofactor.

The protein resides in the cytoplasm. It catalyses the reaction N(6)-dimethylallyladenosine(37) in tRNA + (sulfur carrier)-SH + AH2 + 2 S-adenosyl-L-methionine = 2-methylsulfanyl-N(6)-dimethylallyladenosine(37) in tRNA + (sulfur carrier)-H + 5'-deoxyadenosine + L-methionine + A + S-adenosyl-L-homocysteine + 2 H(+). Catalyzes the methylthiolation of N6-(dimethylallyl)adenosine (i(6)A), leading to the formation of 2-methylthio-N6-(dimethylallyl)adenosine (ms(2)i(6)A) at position 37 in tRNAs that read codons beginning with uridine. The polypeptide is tRNA-2-methylthio-N(6)-dimethylallyladenosine synthase (Francisella tularensis subsp. tularensis (strain FSC 198)).